Consider the following 279-residue polypeptide: Urease accessory protein UreD (279 aa).

It belongs to the UreD family. In terms of assembly, ureD, UreF and UreG form a complex that acts as a GTP-hydrolysis-dependent molecular chaperone, activating the urease apoprotein by helping to assemble the nickel containing metallocenter of UreC. The UreE protein probably delivers the nickel.

It localises to the cytoplasm. Functionally, required for maturation of urease via the functional incorporation of the urease nickel metallocenter. The polypeptide is Urease accessory protein UreD (Trichormus variabilis (strain ATCC 29413 / PCC 7937) (Anabaena variabilis)).